Reading from the N-terminus, the 306-residue chain is Porphobilinogen deaminase (306 aa).

The residue at position 239 (Cys-239) is an S-(dipyrrolylmethanemethyl)cysteine.

Belongs to the HMBS family. As to quaternary structure, monomer. Dipyrromethane is required as a cofactor.

It carries out the reaction 4 porphobilinogen + H2O = hydroxymethylbilane + 4 NH4(+). The protein operates within porphyrin-containing compound metabolism; protoporphyrin-IX biosynthesis; coproporphyrinogen-III from 5-aminolevulinate: step 2/4. Functionally, tetrapolymerization of the monopyrrole PBG into the hydroxymethylbilane pre-uroporphyrinogen in several discrete steps. In Helicobacter pylori (strain HPAG1), this protein is Porphobilinogen deaminase.